A 302-amino-acid chain; its full sequence is Urease accessory protein UreD 2 (302 aa).

This sequence belongs to the UreD family. UreD, UreF and UreG form a complex that acts as a GTP-hydrolysis-dependent molecular chaperone, activating the urease apoprotein by helping to assemble the nickel containing metallocenter of UreC. The UreE protein probably delivers the nickel.

The protein resides in the cytoplasm. Functionally, required for maturation of urease via the functional incorporation of the urease nickel metallocenter. In Brucella ovis (strain ATCC 25840 / 63/290 / NCTC 10512), this protein is Urease accessory protein UreD 2.